A 209-amino-acid chain; its full sequence is Thymidylate kinase (209 aa).

10-17 serves as a coordination point for ATP; the sequence is GIDGCGKS.

Belongs to the thymidylate kinase family.

It carries out the reaction dTMP + ATP = dTDP + ADP. Functionally, phosphorylation of dTMP to form dTDP in both de novo and salvage pathways of dTTP synthesis. This chain is Thymidylate kinase, found in Parasynechococcus marenigrum (strain WH8102).